A 228-amino-acid chain; its full sequence is CD302 antigen (228 aa).

Residues 1–20 (MPHAALSSLVLLSLATAIFA) form the signal peptide. The Extracellular segment spans residues 21–165 (DCPSSIWVQF…YDKKYLSDNH (145 aa)). Positions 30-149 (FQGSCYTFLQ…CEMSSVTGTL (120 aa)) constitute a C-type lectin domain. Residue Asn-107 is glycosylated (N-linked (GlcNAc...) asparagine). An intrachain disulfide couples Cys-125 to Cys-140. A helical membrane pass occupies residues 166–186 (ILISTLVIASTVTLAVLGAVI). Residues 187 to 228 (WFLYRRSARSGFTSFSPAPQSPYSDGCALVVSEEDEYSVQLD) are Cytoplasmic-facing.

Its subcellular location is the membrane. It is found in the cell projection. It localises to the filopodium. The protein resides in the cytoplasm. The protein localises to the cell cortex. Its subcellular location is the microvillus. Its function is as follows. Potential multifunctional C-type lectin receptor that may play roles in endocytosis and phagocytosis as well as in cell adhesion and migration. This Rattus norvegicus (Rat) protein is CD302 antigen (Cd302).